The chain runs to 486 residues: 3-dehydroshikimate dehydratase (486 aa).

The enzyme catalyses 3-dehydroshikimate = 3,4-dihydroxybenzoate + H2O. It functions in the pathway aromatic compound metabolism; 3,4-dihydroxybenzoate biosynthesis; 3,4-dihydroxybenzoate from 3-dehydroquinate: step 2/2. In terms of biological role, converts dehydroshikimate to protocatechuate. The sequence is that of 3-dehydroshikimate dehydratase (quiC) from Acinetobacter baylyi (strain ATCC 33305 / BD413 / ADP1).